Here is a 139-residue protein sequence, read N- to C-terminus: TDP-4-oxo-6-deoxy-alpha-D-glucose-3,4-oxoisomerase (139 aa).

Histidine 49 acts as the Proton acceptor in catalysis.

Homodimer.

The enzyme catalyses dTDP-4-dehydro-6-deoxy-alpha-D-glucose = dTDP-3-dehydro-6-deoxy-alpha-D-galactose. Functionally, mediates the isomerization of dTDP-6-deoxy-D-xylohex-4-ulose into dTDP-6-deoxy-D-xylohex-3-ulose in the biosynthesis of dTDP-3-acetamido-3,6-dideoxy-alpha-D-galactose, a glycan chain of the S-layer. The polypeptide is TDP-4-oxo-6-deoxy-alpha-D-glucose-3,4-oxoisomerase (fdtA) (Aneurinibacillus thermoaerophilus).